The chain runs to 286 residues: 2,3,4,5-tetrahydropyridine-2,6-dicarboxylate N-succinyltransferase (286 aa).

Belongs to the transferase hexapeptide repeat family.

It is found in the cytoplasm. It carries out the reaction (S)-2,3,4,5-tetrahydrodipicolinate + succinyl-CoA + H2O = (S)-2-succinylamino-6-oxoheptanedioate + CoA. Its pathway is amino-acid biosynthesis; L-lysine biosynthesis via DAP pathway; LL-2,6-diaminopimelate from (S)-tetrahydrodipicolinate (succinylase route): step 1/3. This is 2,3,4,5-tetrahydropyridine-2,6-dicarboxylate N-succinyltransferase from Rhizobium leguminosarum bv. trifolii (strain WSM2304).